A 587-amino-acid polypeptide reads, in one-letter code: Sulfite reductase [NADPH] hemoprotein beta-component (587 aa).

Polar residues predominate over residues Met-1 to Pro-13. A disordered region spans residues Met-1 to Gln-20. [4Fe-4S] cluster contacts are provided by Cys-439, Cys-445, Cys-484, and Cys-488. Cys-488 contributes to the siroheme binding site.

Belongs to the nitrite and sulfite reductase 4Fe-4S domain family. As to quaternary structure, alpha(8)-beta(8). The alpha component is a flavoprotein, the beta component is a hemoprotein. Siroheme is required as a cofactor. The cofactor is [4Fe-4S] cluster.

It catalyses the reaction hydrogen sulfide + 3 NADP(+) + 3 H2O = sulfite + 3 NADPH + 4 H(+). The protein operates within sulfur metabolism; hydrogen sulfide biosynthesis; hydrogen sulfide from sulfite (NADPH route): step 1/1. Component of the sulfite reductase complex that catalyzes the 6-electron reduction of sulfite to sulfide. This is one of several activities required for the biosynthesis of L-cysteine from sulfate. This Bordetella petrii (strain ATCC BAA-461 / DSM 12804 / CCUG 43448) protein is Sulfite reductase [NADPH] hemoprotein beta-component.